The primary structure comprises 141 residues: Translation initiation factor 2 subunit beta (141 aa).

This sequence belongs to the eIF-2-beta/eIF-5 family. In terms of assembly, heterotrimer composed of an alpha, a beta and a gamma chain.

Functionally, eIF-2 functions in the early steps of protein synthesis by forming a ternary complex with GTP and initiator tRNA. In Sulfolobus acidocaldarius (strain ATCC 33909 / DSM 639 / JCM 8929 / NBRC 15157 / NCIMB 11770), this protein is Translation initiation factor 2 subunit beta.